The sequence spans 383 residues: Putative F-box protein At3g22650 (383 aa).

The F-box domain maps to 3–50 (SCERSLLPIDIIEEICCRIPVEYLTQFKLTCKQWFALLKDKRFIYKYL).

The sequence is that of Putative F-box protein At3g22650 from Arabidopsis thaliana (Mouse-ear cress).